The following is a 290-amino-acid chain: Ribonuclease 3 (290 aa).

The region spanning 20 to 145 is the RNase III domain; the sequence is YSCFYRILGF…FIGAIYLDRG (126 aa). Glu-62 lines the Mg(2+) pocket. The active site involves Asp-66. Residues Asn-131 and Glu-134 each contribute to the Mg(2+) site. Glu-134 is a catalytic residue. Positions 173-242 constitute a DRBM domain; the sequence is NFKSKLIEWS…AQMTLKKIKG (70 aa). The tract at residues 254-290 is disordered; it reads KTQNNVPAEDTTPESEMSLTAENQQIDEIISTEEISV. The segment covering 267–279 has biased composition (polar residues); sequence ESEMSLTAENQQI.

The protein belongs to the ribonuclease III family. Homodimer. Requires Mg(2+) as cofactor.

It localises to the cytoplasm. It catalyses the reaction Endonucleolytic cleavage to 5'-phosphomonoester.. Functionally, digests double-stranded RNA. Involved in the processing of primary rRNA transcript to yield the immediate precursors to the large and small rRNAs (23S and 16S). Processes some mRNAs, and tRNAs when they are encoded in the rRNA operon. Processes pre-crRNA and tracrRNA of type II CRISPR loci if present in the organism. The chain is Ribonuclease 3 from Bacteroides fragilis (strain YCH46).